The sequence spans 268 residues: Ribosomal RNA small subunit methyltransferase A (268 aa).

S-adenosyl-L-methionine-binding residues include N18, L20, G45, E66, D91, and N112.

The protein belongs to the class I-like SAM-binding methyltransferase superfamily. rRNA adenine N(6)-methyltransferase family. RsmA subfamily.

Its subcellular location is the cytoplasm. It catalyses the reaction adenosine(1518)/adenosine(1519) in 16S rRNA + 4 S-adenosyl-L-methionine = N(6)-dimethyladenosine(1518)/N(6)-dimethyladenosine(1519) in 16S rRNA + 4 S-adenosyl-L-homocysteine + 4 H(+). Functionally, specifically dimethylates two adjacent adenosines (A1518 and A1519) in the loop of a conserved hairpin near the 3'-end of 16S rRNA in the 30S particle. May play a critical role in biogenesis of 30S subunits. The sequence is that of Ribosomal RNA small subunit methyltransferase A from Shewanella baltica (strain OS185).